Reading from the N-terminus, the 232-residue chain is Cytidylate kinase (232 aa).

10–18 (GPAASGKST) contacts ATP.

The protein belongs to the cytidylate kinase family. Type 1 subfamily.

It is found in the cytoplasm. The catalysed reaction is CMP + ATP = CDP + ADP. The enzyme catalyses dCMP + ATP = dCDP + ADP. This is Cytidylate kinase from Phytoplasma mali (strain AT).